Here is a 387-residue protein sequence, read N- to C-terminus: S-adenosylmethionine synthase (387 aa).

H19 contributes to the ATP binding site. D21 is a binding site for Mg(2+). A K(+)-binding site is contributed by E47. Q103 contributes to the L-methionine binding site. The segment at 103-113 is flexible loop; it reads QSPDIAQGVEL. Residues 167-169, 233-234, D242, 248-249, A265, and K269 each bind ATP; these read DMK, RF, and RK. D242 is an L-methionine binding site. K273 serves as a coordination point for L-methionine.

It belongs to the AdoMet synthase family. Homotetramer; dimer of dimers. Mg(2+) serves as cofactor. It depends on K(+) as a cofactor.

Its subcellular location is the cytoplasm. It catalyses the reaction L-methionine + ATP + H2O = S-adenosyl-L-methionine + phosphate + diphosphate. It participates in amino-acid biosynthesis; S-adenosyl-L-methionine biosynthesis; S-adenosyl-L-methionine from L-methionine: step 1/1. In terms of biological role, catalyzes the formation of S-adenosylmethionine (AdoMet) from methionine and ATP. The overall synthetic reaction is composed of two sequential steps, AdoMet formation and the subsequent tripolyphosphate hydrolysis which occurs prior to release of AdoMet from the enzyme. This is S-adenosylmethionine synthase from Mycoplasma capricolum subsp. capricolum (strain California kid / ATCC 27343 / NCTC 10154).